The following is a 157-amino-acid chain: Arginine repressor (157 aa).

The protein belongs to the ArgR family.

It is found in the cytoplasm. It functions in the pathway amino-acid biosynthesis; L-arginine biosynthesis [regulation]. Its function is as follows. Regulates arginine biosynthesis genes. The polypeptide is Arginine repressor (Colwellia psychrerythraea (strain 34H / ATCC BAA-681) (Vibrio psychroerythus)).